We begin with the raw amino-acid sequence, 268 residues long: Small ribosomal subunit protein eS1 (268 aa).

The protein belongs to the eukaryotic ribosomal protein eS1 family. In terms of assembly, component of the small ribosomal subunit. Mature ribosomes consist of a small (40S) and a large (60S) subunit. The 40S subunit contains about 33 different proteins and 1 molecule of RNA (18S). The 60S subunit contains about 49 different proteins and 3 molecules of RNA (28S, 5.8S and 5S).

It is found in the cytoplasm. The chain is Small ribosomal subunit protein eS1 from Artemia franciscana (Brine shrimp).